An 85-amino-acid chain; its full sequence is HssA/B-like protein 59 (85 aa).

The protein belongs to the hssA/B family.

This Dictyostelium discoideum (Social amoeba) protein is HssA/B-like protein 59 (hssl59).